Consider the following 160-residue polypeptide: Transcription antitermination protein NusB (160 aa).

The protein belongs to the NusB family.

Functionally, involved in transcription antitermination. Required for transcription of ribosomal RNA (rRNA) genes. Binds specifically to the boxA antiterminator sequence of the ribosomal RNA (rrn) operons. The sequence is that of Transcription antitermination protein NusB from Rhizobium johnstonii (strain DSM 114642 / LMG 32736 / 3841) (Rhizobium leguminosarum bv. viciae).